The chain runs to 555 residues: Intraflagellar transport protein 56 (555 aa).

TPR repeat units follow at residues 57-90, 151-184, and 393-426; these read LKNLEWLAYCYFHYGEHDKALVIYKELLQHEDPD, IEDQLTLASIHYQRSHFQEATDIYKRLLLEHRDY, and DDFNWNLGIAKAATGKYKEAEETLLQIANDKYRN.

It belongs to the IFT56 family. As to quaternary structure, component of the IFT complex B.

It is found in the cell projection. The protein localises to the cilium. It localises to the flagellum. Component of the intraflagellar transport (IFT) complex B required for transport of proteins in the motile cilium. Required for transport of specific ciliary cargo proteins related to motility, while it is neither required for IFT complex B assembly or motion nor for cilium assembly. This Chlamydomonas reinhardtii (Chlamydomonas smithii) protein is Intraflagellar transport protein 56.